A 188-amino-acid polypeptide reads, in one-letter code: Adenine phosphoribosyltransferase (188 aa).

It belongs to the purine/pyrimidine phosphoribosyltransferase family. Homodimer.

It localises to the cytoplasm. The enzyme catalyses AMP + diphosphate = 5-phospho-alpha-D-ribose 1-diphosphate + adenine. The protein operates within purine metabolism; AMP biosynthesis via salvage pathway; AMP from adenine: step 1/1. Functionally, catalyzes a salvage reaction resulting in the formation of AMP, that is energically less costly than de novo synthesis. The polypeptide is Adenine phosphoribosyltransferase (Neisseria meningitidis serogroup A / serotype 4A (strain DSM 15465 / Z2491)).